The following is a 174-amino-acid chain: ATP synthase subunit delta (174 aa).

This sequence belongs to the ATPase delta chain family. As to quaternary structure, F-type ATPases have 2 components, F(1) - the catalytic core - and F(0) - the membrane proton channel. F(1) has five subunits: alpha(3), beta(3), gamma(1), delta(1), epsilon(1). F(0) has three main subunits: a(1), b(2) and c(10-14). The alpha and beta chains form an alternating ring which encloses part of the gamma chain. F(1) is attached to F(0) by a central stalk formed by the gamma and epsilon chains, while a peripheral stalk is formed by the delta and b chains.

It localises to the cell inner membrane. In terms of biological role, f(1)F(0) ATP synthase produces ATP from ADP in the presence of a proton or sodium gradient. F-type ATPases consist of two structural domains, F(1) containing the extramembraneous catalytic core and F(0) containing the membrane proton channel, linked together by a central stalk and a peripheral stalk. During catalysis, ATP synthesis in the catalytic domain of F(1) is coupled via a rotary mechanism of the central stalk subunits to proton translocation. This protein is part of the stalk that links CF(0) to CF(1). It either transmits conformational changes from CF(0) to CF(1) or is implicated in proton conduction. The protein is ATP synthase subunit delta of Francisella philomiragia subsp. philomiragia (strain ATCC 25017 / CCUG 19701 / FSC 153 / O#319-036).